An 85-amino-acid chain; its full sequence is UPF0386 protein Arad_1912 (85 aa).

It belongs to the UPF0386 family.

The sequence is that of UPF0386 protein Arad_1912 from Rhizobium rhizogenes (strain K84 / ATCC BAA-868) (Agrobacterium radiobacter).